The following is a 130-amino-acid chain: Small ribosomal subunit protein uS9 (130 aa).

It belongs to the universal ribosomal protein uS9 family.

The protein is Small ribosomal subunit protein uS9 of Serratia proteamaculans (strain 568).